We begin with the raw amino-acid sequence, 421 residues long: Histidine--tRNA ligase (421 aa).

The protein belongs to the class-II aminoacyl-tRNA synthetase family. In terms of assembly, homodimer.

It localises to the cytoplasm. It carries out the reaction tRNA(His) + L-histidine + ATP = L-histidyl-tRNA(His) + AMP + diphosphate + H(+). The polypeptide is Histidine--tRNA ligase (Francisella tularensis subsp. holarctica (strain LVS)).